The following is a 199-amino-acid chain: Patulin biosynthesis cluster protein F (199 aa).

Positions 1-21 are cleaved as a signal peptide; the sequence is MKSSLWVSLAVSLIGLGPAAA. Asn129 and Asn183 each carry an N-linked (GlcNAc...) asparagine glycan.

Belongs to the patF family.

It localises to the cytoplasm. The protein localises to the cytosol. The catalysed reaction is phyllostine = neopatulin. It functions in the pathway mycotoxin biosynthesis; patulin biosynthesis. In terms of biological role, part of the gene cluster that mediates the biosynthesis of patulin, an acetate-derived tetraketide mycotoxin produced by several fungal species that shows antimicrobial properties against several bacteria. PatF catalyzes the conversion of phyllostine into neopatulin. The pathway begins with the synthesis of 6-methylsalicylic acid by the polyketide synthase (PKS) patK via condensation of acetate and malonate units. The 6-methylsalicylic acid decarboxylase patG then catalyzes the decarboxylation of 6-methylsalicylic acid to yield m-cresol (also known as 3-methylphenol). These first reactions occur in the cytosol. The intermediate m-cresol is then transported into the endoplasmic reticulum where the cytochrome P450 monooxygenase patH converts it to m-hydroxybenzyl alcohol, which is further converted to gentisyl alcohol by the cytochrome P450 monooxygenase patI. The oxidoreductases patJ and patO further convert gentisyl alcohol to isoepoxydon in the vacuole. PatN catalyzes then the transformation of isoepoxydon into phyllostine. The cluster protein patF is responsible for the conversion from phyllostine to neopatulin whereas the alcohol dehydrogenase patD converts neopatulin to E-ascladiol. The steps between isoepoxydon and E-ascladiol occur in the cytosol, and E-ascladiol is probably secreted to the extracellular space by one of the cluster-specific transporters patC or patM. Finally, the secreted patulin synthase patE catalyzes the conversion of E-ascladiol to patulin. This Penicillium expansum (Blue mold rot fungus) protein is Patulin biosynthesis cluster protein F.